A 131-amino-acid polypeptide reads, in one-letter code: 14.7 kDa heat shock protein (131 aa).

The span at 1-11 (MSRNMEVNAGS) shows a compositional bias: polar residues. The tract at residues 1 to 20 (MSRNMEVNAGSSGEIPSPIR) is disordered. The 110-residue stretch at 22–131 (RFQKSGSQAV…INVKERILHY (110 aa)) folds into the sHSP domain.

The protein belongs to the small heat shock protein (HSP20) family. May form oligomeric structures.

It localises to the cytoplasm. The polypeptide is 14.7 kDa heat shock protein (HSP14.7) (Arabidopsis thaliana (Mouse-ear cress)).